The sequence spans 372 residues: Flagellar P-ring protein (372 aa).

A signal peptide spans 1 to 26 (MNLSSLPFRLLAAAVALCAIAAPASA).

Belongs to the FlgI family. The basal body constitutes a major portion of the flagellar organelle and consists of four rings (L,P,S, and M) mounted on a central rod.

The protein resides in the periplasm. It is found in the bacterial flagellum basal body. Assembles around the rod to form the L-ring and probably protects the motor/basal body from shearing forces during rotation. This is Flagellar P-ring protein from Xanthomonas campestris pv. campestris (strain B100).